A 720-amino-acid polypeptide reads, in one-letter code: Polyribonucleotide nucleotidyltransferase (720 aa).

Mg(2+) contacts are provided by Asp484 and Asp490. The 60-residue stretch at 551-610 (PRMYKISIDPSKIGSVIGSGGKTIRSIIEQTNTTVDIENDGTVVIGATDEASAQKAIKII) folds into the KH domain. The 69-residue stretch at 620-688 (GSVYTGKVTR…SQGRINLSRR (69 aa)) folds into the S1 motif domain. The tract at residues 697 to 720 (PISRNRDSQPRRSGPFRPQDRSNS) is disordered.

Belongs to the polyribonucleotide nucleotidyltransferase family. It depends on Mg(2+) as a cofactor.

The protein localises to the cytoplasm. The catalysed reaction is RNA(n+1) + phosphate = RNA(n) + a ribonucleoside 5'-diphosphate. Involved in mRNA degradation. Catalyzes the phosphorolysis of single-stranded polyribonucleotides processively in the 3'- to 5'-direction. This is Polyribonucleotide nucleotidyltransferase from Dehalococcoides mccartyi (strain ATCC BAA-2266 / KCTC 15142 / 195) (Dehalococcoides ethenogenes (strain 195)).